Consider the following 427-residue polypeptide: L-rhamnose isomerase (427 aa).

Residues His-264, Asp-296, and Asp-298 each contribute to the Mn(2+) site.

This sequence belongs to the rhamnose isomerase family. The cofactor is Mn(2+).

It localises to the cytoplasm. It carries out the reaction L-rhamnopyranose = L-rhamnulose. The protein operates within carbohydrate degradation; L-rhamnose degradation; glycerone phosphate from L-rhamnose: step 1/3. Its function is as follows. Catalyzes the interconversion of L-rhamnose and L-rhamnulose. The protein is L-rhamnose isomerase of Rhodopirellula baltica (strain DSM 10527 / NCIMB 13988 / SH1).